We begin with the raw amino-acid sequence, 179 residues long: MAELATIARPYADALFKASTQQGADLSGTVAWAEELAAIAANPQLRQLADDPKVTDEQLFDVISGVAGSALPDAARNFLRVIIENGRLQALPEVAAQFRSLVNRAGGSSDAVVQSAFPIDAAALAALGTSLEKRFGRKLNLSVQQDQSLIGGIRVVVGDEVLDTSVKARLEQMKAALIA.

The protein belongs to the ATPase delta chain family. As to quaternary structure, F-type ATPases have 2 components, F(1) - the catalytic core - and F(0) - the membrane proton channel. F(1) has five subunits: alpha(3), beta(3), gamma(1), delta(1), epsilon(1). F(0) has three main subunits: a(1), b(2) and c(10-14). The alpha and beta chains form an alternating ring which encloses part of the gamma chain. F(1) is attached to F(0) by a central stalk formed by the gamma and epsilon chains, while a peripheral stalk is formed by the delta and b chains.

The protein localises to the cell inner membrane. Functionally, f(1)F(0) ATP synthase produces ATP from ADP in the presence of a proton or sodium gradient. F-type ATPases consist of two structural domains, F(1) containing the extramembraneous catalytic core and F(0) containing the membrane proton channel, linked together by a central stalk and a peripheral stalk. During catalysis, ATP synthesis in the catalytic domain of F(1) is coupled via a rotary mechanism of the central stalk subunits to proton translocation. This protein is part of the stalk that links CF(0) to CF(1). It either transmits conformational changes from CF(0) to CF(1) or is implicated in proton conduction. This chain is ATP synthase subunit delta, found in Delftia acidovorans (strain DSM 14801 / SPH-1).